Here is a 473-residue protein sequence, read N- to C-terminus: MQALQSSSLRASPPNPLRLPSNRQSHQLITNARPLRRQQRSFISASASTVSAPKRETDPKKRVVITGMGLVSVFGNDVDAYYEKLLSGESGISLIDRFDASKFPTRFGGQIRGFSSEGYIDGKNERRLDDCLKYCIVAGKKALESANLGGDKLNTIDKRKAGVLVGTGMGGLTVFSEGVQNLIEKGHRRISPFFIPYAITNMGSALLAIDLGLMGPNYSISTACATSNYCFYAAANHIRRGEADMMIAGGTEAAIIPIGLGGFVACRALSQRNDDPQTASRPWDKARDGFVMGEGAGVLVMESLEHAMKRGAPIVAEYLGGAVNCDAHHMTDPRADGLGVSSCIERCLEDAGVSPEEVNYINAHATSTLAGDLAEINAIKKVFKSTSGIKINATKSMIGHCLGAAGGLEAIATVKAINTGWLHPSINQFNPEQAVDFDTVPNEKKQHEVDVAISNSFGFGGHNSVVAFSAFKP.

The span at 1–10 (MQALQSSSLR) shows a compositional bias: polar residues. The interval 1–26 (MQALQSSSLRASPPNPLRLPSNRQSH) is disordered. A chloroplast-targeting transit peptide spans 1 to 46 (MQALQSSSLRASPPNPLRLPSNRQSHQLITNARPLRRQQRSFISAS). The region spanning 60-470 (KKRVVITGMG…GHNSVVAFSA (411 aa)) is the Ketosynthase family 3 (KS3) domain. Residues cysteine 224, histidine 364, and histidine 400 each act as for beta-ketoacyl synthase activity in the active site.

It belongs to the thiolase-like superfamily. Beta-ketoacyl-ACP synthases family. Homodimer.

It localises to the plastid. The protein resides in the chloroplast stroma. It carries out the reaction a fatty acyl-[ACP] + malonyl-[ACP] + H(+) = a 3-oxoacyl-[ACP] + holo-[ACP] + CO2. Functionally, catalyzes the condensation reaction of fatty acid synthesis by the addition to an acyl acceptor of two carbons from malonyl-ACP. Specific for elongation from C-10 to unsaturated C-16 and C-18 fatty acids. The polypeptide is 3-oxoacyl-[acyl-carrier-protein] synthase I, chloroplastic (KAS1) (Arabidopsis thaliana (Mouse-ear cress)).